The chain runs to 94 residues: Large ribosomal subunit protein eL42 (94 aa).

C11, C14, C70, and C73 together coordinate Zn(2+). Residues 11 to 73 (CPYCKKHTIH…IDLRFKCTEC (63 aa)) form a C4-type zinc finger.

Belongs to the eukaryotic ribosomal protein eL42 family. As to quaternary structure, part of the 50S ribosomal subunit. Zn(2+) is required as a cofactor.

Its function is as follows. Binds to the 23S rRNA. This is Large ribosomal subunit protein eL42 from Methanocaldococcus jannaschii (strain ATCC 43067 / DSM 2661 / JAL-1 / JCM 10045 / NBRC 100440) (Methanococcus jannaschii).